A 317-amino-acid polypeptide reads, in one-letter code: tRNA-cytidine(32) 2-sulfurtransferase (317 aa).

A PP-loop motif motif is present at residues 46–51 (SGGKDS). Residues Cys121, Cys124, and Cys212 each coordinate [4Fe-4S] cluster.

It belongs to the TtcA family. As to quaternary structure, homodimer. Requires Mg(2+) as cofactor. The cofactor is [4Fe-4S] cluster.

The protein resides in the cytoplasm. It carries out the reaction cytidine(32) in tRNA + S-sulfanyl-L-cysteinyl-[cysteine desulfurase] + AH2 + ATP = 2-thiocytidine(32) in tRNA + L-cysteinyl-[cysteine desulfurase] + A + AMP + diphosphate + H(+). Its pathway is tRNA modification. Catalyzes the ATP-dependent 2-thiolation of cytidine in position 32 of tRNA, to form 2-thiocytidine (s(2)C32). The sulfur atoms are provided by the cysteine/cysteine desulfurase (IscS) system. This Shewanella loihica (strain ATCC BAA-1088 / PV-4) protein is tRNA-cytidine(32) 2-sulfurtransferase.